The primary structure comprises 138 residues: Large ribosomal subunit protein uL16c (138 aa).

Residues 1-21 (MLSPQKTKFRKQHRGRMKGVS) form a disordered region. Positions 7-21 (TKFRKQHRGRMKGVS) are enriched in basic residues.

The protein belongs to the universal ribosomal protein uL16 family. As to quaternary structure, part of the 50S ribosomal subunit.

It is found in the plastid. Its subcellular location is the chloroplast. This is Large ribosomal subunit protein uL16c from Cycas taitungensis (Prince sago).